The chain runs to 940 residues: Isoleucine--tRNA ligase (940 aa).

Positions 58-68 match the 'HIGH' region motif; that stretch reads PYANGAIHIGH. E564 contributes to the L-isoleucyl-5'-AMP binding site. A 'KMSKS' region motif is present at residues 605–609; it reads KMSKS. K608 is a binding site for ATP. Zn(2+) is bound by residues C903, C906, C923, and C926.

This sequence belongs to the class-I aminoacyl-tRNA synthetase family. IleS type 1 subfamily. As to quaternary structure, monomer. The cofactor is Zn(2+).

The protein resides in the cytoplasm. It catalyses the reaction tRNA(Ile) + L-isoleucine + ATP = L-isoleucyl-tRNA(Ile) + AMP + diphosphate. Catalyzes the attachment of isoleucine to tRNA(Ile). As IleRS can inadvertently accommodate and process structurally similar amino acids such as valine, to avoid such errors it has two additional distinct tRNA(Ile)-dependent editing activities. One activity is designated as 'pretransfer' editing and involves the hydrolysis of activated Val-AMP. The other activity is designated 'posttransfer' editing and involves deacylation of mischarged Val-tRNA(Ile). This chain is Isoleucine--tRNA ligase, found in Nitrosococcus oceani (strain ATCC 19707 / BCRC 17464 / JCM 30415 / NCIMB 11848 / C-107).